We begin with the raw amino-acid sequence, 92 residues long: Small ribosomal subunit protein uS19c (92 aa).

This sequence belongs to the universal ribosomal protein uS19 family.

Its subcellular location is the plastid. It is found in the chloroplast. Its function is as follows. Protein S19 forms a complex with S13 that binds strongly to the 16S ribosomal RNA. The polypeptide is Small ribosomal subunit protein uS19c (Chlorokybus atmophyticus (Soil alga)).